A 100-amino-acid chain; its full sequence is Ubiquitin-related modifier 1 homolog (100 aa).

A 1-thioglycine modification is found at G100. Residue G100 forms a Glycyl lysine isopeptide (Gly-Lys) (interchain with K-? in acceptor proteins) linkage.

Belongs to the URM1 family. C-terminal thiocarboxylation occurs in 2 steps, it is first acyl-adenylated (-COAMP) via the hesA/moeB/thiF part of the MOCS3 homolog, then thiocarboxylated (-COSH) via the rhodanese domain of the MOCS3 homolog.

The protein resides in the cytoplasm. The protein operates within tRNA modification; 5-methoxycarbonylmethyl-2-thiouridine-tRNA biosynthesis. Functionally, acts as a sulfur carrier required for 2-thiolation of mcm(5)S(2)U at tRNA wobble positions of cytosolic tRNA(Lys), tRNA(Glu) and tRNA(Gln). Serves as sulfur donor in tRNA 2-thiolation reaction by being thiocarboxylated (-COSH) at its C-terminus by MOCS3. The sulfur is then transferred to tRNA to form 2-thiolation of mcm(5)S(2)U. Also acts as a ubiquitin-like protein (UBL) that is covalently conjugated via an isopeptide bond to lysine residues of target proteins. The thiocarboxylated form serves as substrate for conjugation and oxidative stress specifically induces the formation of UBL-protein conjugates. The protein is Ubiquitin-related modifier 1 homolog of Caenorhabditis elegans.